A 706-amino-acid polypeptide reads, in one-letter code: Polyribonucleotide nucleotidyltransferase (706 aa).

2 residues coordinate Mg(2+): Asp-486 and Asp-492. The region spanning 553 to 612 (PRIHTIKISTDKIKDVIGKGGSVIRALTEETGTTIEIEDDGTVKIASTDGEKAKHAIRRI) is the KH domain. An S1 motif domain is found at 622–690 (GRVYQGKVTR…RQGRVRLSIK (69 aa)).

The protein belongs to the polyribonucleotide nucleotidyltransferase family. In terms of assembly, component of the RNA degradosome, which is a multiprotein complex involved in RNA processing and mRNA degradation. Requires Mg(2+) as cofactor.

The protein localises to the cytoplasm. The enzyme catalyses RNA(n+1) + phosphate = RNA(n) + a ribonucleoside 5'-diphosphate. In terms of biological role, involved in mRNA degradation. Catalyzes the phosphorolysis of single-stranded polyribonucleotides processively in the 3'- to 5'-direction. The protein is Polyribonucleotide nucleotidyltransferase of Pectobacterium carotovorum subsp. carotovorum (strain PC1).